The following is a 475-amino-acid chain: UDP-glycosyltransferase 101 (475 aa).

The active-site Proton acceptor is H15. H15 is a binding site for an anthocyanidin. D117 functions as the Charge relay in the catalytic mechanism. Residues A345, Q347, H362, W365, N366, S367, and E370 each coordinate UDP-alpha-D-glucose. G385 contributes to the an anthocyanidin binding site. UDP-alpha-D-glucose-binding residues include E386 and Q387.

Belongs to the UDP-glycosyltransferase family.

The catalysed reaction is (20S)-protopanaxadiol + UDP-alpha-D-glucose = (20S)-ginsenoside C-K + UDP + H(+). The enzyme catalyses (20S)-ginsenoside Rg3 + UDP-alpha-D-glucose = (20S)-ginsenoside Rd + UDP + H(+). It carries out the reaction (20S)-protopanaxatriol + UDP-alpha-D-glucose = (20S)-ginsenoside F1 + UDP + H(+). It catalyses the reaction (20S)-ginsenoside F1 + UDP-alpha-D-glucose = (20S)-ginsenoside Rg1 + UDP + H(+). Its pathway is secondary metabolite biosynthesis; terpenoid biosynthesis. Its function is as follows. Component of the dammarane-type triterpene saponins (e.g. ginsenosides or panaxosides) biosynthetic pathway. Glycosyltransferase that catalyzes the biosynthesis of ginsenoside F1 from protopanaxatriol (PPT) and the conversion of ginsenoside F1 to ginsenoside Rg1. Triggers C20-OH glycosylation of ginsenoside Rg3 to produce ginsenoside Rd. Mediates the conversion of protopanaxadiol (PPD) to the ginsenoside compound K. This is UDP-glycosyltransferase 101 from Panax ginseng (Korean ginseng).